A 395-amino-acid chain; its full sequence is Alanine racemase 2 (395 aa).

Residue K60 is the Proton acceptor; specific for D-alanine of the active site. Position 60 is an N6-(pyridoxal phosphate)lysine (K60). R158 contributes to the substrate binding site. The Proton acceptor; specific for L-alanine role is filled by Y288. M332 is a substrate binding site.

It belongs to the alanine racemase family. Pyridoxal 5'-phosphate is required as a cofactor.

It catalyses the reaction L-alanine = D-alanine. It participates in amino-acid biosynthesis; D-alanine biosynthesis; D-alanine from L-alanine: step 1/1. Its function is as follows. Catalyzes the interconversion of L-alanine and D-alanine. May also act on other amino acids. The polypeptide is Alanine racemase 2 (alr2) (Clostridium acetobutylicum (strain ATCC 824 / DSM 792 / JCM 1419 / IAM 19013 / LMG 5710 / NBRC 13948 / NRRL B-527 / VKM B-1787 / 2291 / W)).